Consider the following 616-residue polypeptide: Protein phosphatase EYA4 (616 aa).

Residue methionine 1 is modified to N-acetylmethionine. 3 disordered regions span residues 1–66 (MEDT…VTTN), 186–211 (SQTQ…PGQT), and 277–345 (ADGT…DSDL). Glycyl lysine isopeptide (Lys-Gly) (interchain with G-Cter in SUMO2) cross-links involve residues lysine 14 and lysine 52. A compositionally biased stretch (low complexity) spans 56–66 (SGLSSTSVTTN). A compositionally biased stretch (polar residues) spans 277 to 311 (ADGTSSSTSTYQLQESLQGLTSQPGEFDTVQSPST). Serine 338 is subject to Phosphoserine. The active-site Nucleophile is aspartate 352. The Mg(2+) site is built by aspartate 352, aspartate 354, and aspartate 580. Aspartate 354 functions as the Proton donor in the catalytic mechanism.

The protein belongs to the HAD-like hydrolase superfamily. EYA family. As to quaternary structure, interacts with SIX3; translocates EYA4 from the cytoplasm to the nucleus and promotes activation of their target genes. The cofactor is Mg(2+). In the embryo, expressed mainly in the craniofacial mesenchyme, dermamyotome and limb.

It localises to the cytoplasm. The protein resides in the nucleus. It carries out the reaction O-phospho-L-tyrosyl-[protein] + H2O = L-tyrosyl-[protein] + phosphate. Its function is as follows. Tyrosine phosphatase that specifically dephosphorylates 'Tyr-142' of histone H2AX (H2AXY142ph). 'Tyr-142' phosphorylation of histone H2AX plays a central role in DNA repair and acts as a mark that distinguishes between apoptotic and repair responses to genotoxic stress. Promotes efficient DNA repair by dephosphorylating H2AX, promoting the recruitment of DNA repair complexes containing MDC1. Its function as histone phosphatase probably explains its role in transcription regulation during organogenesis. May be involved in development of the eye. The sequence is that of Protein phosphatase EYA4 (Eya4) from Mus musculus (Mouse).